We begin with the raw amino-acid sequence, 325 residues long: NAD kinase (325 aa).

The Proton acceptor role is filled by Asp-91. NAD(+) contacts are provided by residues 91-92 (DG), His-96, 165-166 (ND), His-176, His-193, Asp-195, and 206-211 (TAYALS).

It belongs to the NAD kinase family. It depends on a divalent metal cation as a cofactor.

The protein resides in the cytoplasm. It catalyses the reaction NAD(+) + ATP = ADP + NADP(+) + H(+). Its function is as follows. Involved in the regulation of the intracellular balance of NAD and NADP, and is a key enzyme in the biosynthesis of NADP. Catalyzes specifically the phosphorylation on 2'-hydroxyl of the adenosine moiety of NAD to yield NADP. This chain is NAD kinase, found in Psychrobacter arcticus (strain DSM 17307 / VKM B-2377 / 273-4).